Consider the following 380-residue polypeptide: Cystathionine gamma-synthase (380 aa).

The residue at position 195 (Lys-195) is an N6-(pyridoxal phosphate)lysine.

Belongs to the trans-sulfuration enzymes family. Homotetramer. It depends on pyridoxal 5'-phosphate as a cofactor.

The protein resides in the cytoplasm. It catalyses the reaction O-succinyl-L-homoserine + L-cysteine = L,L-cystathionine + succinate + H(+). Its function is as follows. Catalyzes the formation of L-cystathionine from O-succinyl-L-homoserine (OSHS) and L-cysteine, via a gamma-replacement reaction. In the absence of thiol, catalyzes gamma-elimination to form 2-oxobutanoate, succinate and ammonia. This Helicobacter pylori (strain ATCC 700392 / 26695) (Campylobacter pylori) protein is Cystathionine gamma-synthase (metB).